Here is a 169-residue protein sequence, read N- to C-terminus: Crossover junction endodeoxyribonuclease RuvC (169 aa).

Catalysis depends on residues Asp13, Glu73, and Asp145. 3 residues coordinate Mg(2+): Asp13, Glu73, and Asp145.

It belongs to the RuvC family. In terms of assembly, homodimer which binds Holliday junction (HJ) DNA. The HJ becomes 2-fold symmetrical on binding to RuvC with unstacked arms; it has a different conformation from HJ DNA in complex with RuvA. In the full resolvosome a probable DNA-RuvA(4)-RuvB(12)-RuvC(2) complex forms which resolves the HJ. It depends on Mg(2+) as a cofactor.

The protein localises to the cytoplasm. The catalysed reaction is Endonucleolytic cleavage at a junction such as a reciprocal single-stranded crossover between two homologous DNA duplexes (Holliday junction).. In terms of biological role, the RuvA-RuvB-RuvC complex processes Holliday junction (HJ) DNA during genetic recombination and DNA repair. Endonuclease that resolves HJ intermediates. Cleaves cruciform DNA by making single-stranded nicks across the HJ at symmetrical positions within the homologous arms, yielding a 5'-phosphate and a 3'-hydroxyl group; requires a central core of homology in the junction. The consensus cleavage sequence is 5'-(A/T)TT(C/G)-3'. Cleavage occurs on the 3'-side of the TT dinucleotide at the point of strand exchange. HJ branch migration catalyzed by RuvA-RuvB allows RuvC to scan DNA until it finds its consensus sequence, where it cleaves and resolves the cruciform DNA. This chain is Crossover junction endodeoxyribonuclease RuvC, found in Solidesulfovibrio magneticus (strain ATCC 700980 / DSM 13731 / RS-1) (Desulfovibrio magneticus).